A 248-amino-acid polypeptide reads, in one-letter code: MNLSFSSPPLLAELEVGHHLYWHLGKFTVHGQVLIASWIAIALILTVVILGTRQLQREPAGLQNFVEYALEFVQSIARAQIGEKNFRPWVPYVGTLFLFIFVSNWMGNLFPWKLIPLPEGELASPTNDINTTAGLALLTSIMYFVAGISKRGLSYFKKYIEPTPILLPINVLEDFTKPLSLSFRLFGNILAEELVIAVLVLLVPLFIPVPVMVLFLFTGAIQALIFSTLSAAYIGEALEGHGGGDHRD.

5 helical membrane-spanning segments follow: residues 31–51 (GQVL…VILG), 90–110 (VPYV…GNLF), 129–149 (INTT…AGIS), 195–215 (VIAV…MVLF), and 216–236 (LFTG…YIGE).

It belongs to the ATPase A chain family. F-type ATPases have 2 components, CF(1) - the catalytic core - and CF(0) - the membrane proton channel. CF(1) has five subunits: alpha(3), beta(3), gamma(1), delta(1), epsilon(1). CF(0) has four main subunits: a, b, b' and c.

Its subcellular location is the cellular thylakoid membrane. Functionally, key component of the proton channel; it plays a direct role in the translocation of protons across the membrane. This Synechococcus sp. (strain JA-2-3B'a(2-13)) (Cyanobacteria bacterium Yellowstone B-Prime) protein is ATP synthase subunit a.